The chain runs to 567 residues: TNF receptor-associated factor 3 (567 aa).

The interval 1 to 26 (MESSKKMDAAGTLQPNPPLKLQPDRG) is disordered. Cysteine 55 is covalently cross-linked (Glycyl cysteine thioester (Cys-Gly) (interchain with G-Cter in ubiquitin)). The RING-type zinc finger occupies 67-76 (CGHRFCESCM). Residue lysine 106 forms a Glycyl lysine isopeptide (Lys-Gly) (interchain with G-Cter in ubiquitin) linkage. Residue cysteine 123 forms a Glycyl cysteine thioester (Cys-Gly) (interchain with G-Cter in ubiquitin) linkage. TRAF-type zinc fingers lie at residues 134-189 (VHLK…IKLQ) and 190-248 (KHED…QQIK). Residues lysine 155 and lysine 167 each participate in a glycyl lysine isopeptide (Lys-Gly) (interchain with G-Cter in ubiquitin) cross-link. The stretch at 266-337 (SNSLEKKVSL…KLKELDKEIR (72 aa)) forms a coiled coil. Residue lysine 328 forms a Glycyl lysine isopeptide (Lys-Gly) (interchain with G-Cter in ubiquitin) linkage. Residues 414 to 559 (NGVLIWKIRD…DDTIFIKVIV (146 aa)) form the MATH domain.

Belongs to the TNF receptor-associated factor family. A subfamily. As to quaternary structure, homotrimer. Heterotrimer with TRAF2 and TRAF5. Interacts with LTBR/TNFRSF3, TNFRSF4, TNFRSF5/CD40, TNFRSF8/CD30, TNFRSF13C TNFRSF17/BCMA, TLR4 and EDAR. Interacts with MAP3K5, MAP3K14, TRAIP/TRIP, TDP2/TTRAP, TANK/ITRAF and TRAF3IP1. Interaction with TNFRSF5/CD40 is modulated by TANK/ITRAF, which competes for the same binding site. Interacts with TICAM1. Interacts with TRAFD1. Interacts with OTUB1, OTUB2 and OTUD5. Interacts with RNF216, OPTN and TBK1. Identified in a complex with TRAF2, MAP3K14 and BIRC3. Upon exposure to bacterial lipopolysaccharide (LPS), recruited to a transient complex containing TLR4, TRAF3, TRAF6, IKBKG, MAP3K7, MYD88, TICAM1, BIRC2, BIRC3 and UBE2N. Interacts (via RING-type zinc finger domain) with SRC. Interacts with CARD14. Interacts (via MATH domain) with PTPN22; the interaction promotes TRAF3 polyubiquitination. Interacts with MAVS. Directly interacts with DDX3X; this interaction stimulates TRAF3 'Lys-63' ubiquitination. Interacts with IRF3. Interacts with IKBKE in the course of viral infection. Interacts with TRIM35. Interacts with GAPDH; promoting TRAF3 ubiquitination. Interacts with PPP3CA and PPP3CB. Interacts with RALGDS. Interacts with FBXO11. In terms of processing, undergoes 'Lys-48'-linked polyubiquitination, leading to its proteasomal degradation in response to signaling by TNFSF13B, TLR4 or through CD40. 'Lys-48'-linked polyubiquitinated form is deubiquitinated by OTUD7B, preventing TRAF3 proteolysis and over-activation of non-canonical NF-kappa-B. Undergoes 'Lys-63'-linked ubiquitination during early stages of virus infection, and 'Lys-48'-linked ubiquitination during later stages. Undergoes both 'Lys-48'-linked and 'Lys-63'-linked ubiquitination in response to TLR3 and TLR4 signaling. 'Lys-63'-linked ubiquitination can be mediated by TRIM35. Deubiquitinated by OTUB1, OTUB2 and OTUD5. Undergoes 'Lys-63'-linked deubiquitination by MYSM1 to terminate the pattern-recognition receptors/PRRs pathways. Ubiquitinated at Lys-328 by the SCF(FBXL2) complex, leading to its degradation by the proteasome. Undergoes 'Lys-48'-linked polyubiquitination, leading to its proteasomal degradation in response to signaling by TNFSF13B, TLR4 or through CD40. 'Lys-48'-linked polyubiquitinated form is deubiquitinated by OTUD7B, preventing TRAF3 proteolysis and over-activation of non-canonical NF-kappa-B. Undergoes 'Lys-63'-linked ubiquitination during early stages of virus infection, and 'Lys-48'-linked ubiquitination during later stages. Undergoes both 'Lys-48'-linked and 'Lys-63'-linked ubiquitination in response to TLR3 and TLR4 signaling. 'Lys-63'-linked ubiquitination can be mediated by TRIM35. Deubiquitinated by OTUB1, OTUB2 and OTUD5. Undergoes 'Lys-63'-linked deubiquitination by MYSM1 to terminate the pattern-recognition receptors/PRRs pathways. Also undergoes 'Lys-29'-linked ubiquitination on Cys-55 and Cys-123 by NEDD4L; leading to increased 'Lys-48'- and 'Lys-63'-linked ubiquitination as well as increased binding to TBK1. TLR4 signals emanating from bacteria containing vesicles trigger 'Lys-33'-linked polyubiquitination that promotes the assembly of the exocyst complex thereby connecting innate immune signaling to the cellular trafficking apparatus. Deubiquitinated by USP25 during viral infection, leading to TRAF3 stabilization and type I interferon production. 'Lys-63'-linked ubiquitination by FBXO11 in a NEDD8-dependent manner promotes the amplification of IFN-I signaling. Detected in bone marrow macrophages and spleen B-cells (at protein level). In adult, highest in brain. Also found in kidney, heart, thymus, spleen, lung, muscle, testis and ovary. Not found in liver.

The protein resides in the cytoplasm. Its subcellular location is the endosome. It localises to the mitochondrion. It catalyses the reaction S-ubiquitinyl-[E2 ubiquitin-conjugating enzyme]-L-cysteine + [acceptor protein]-L-lysine = [E2 ubiquitin-conjugating enzyme]-L-cysteine + N(6)-ubiquitinyl-[acceptor protein]-L-lysine.. Cytoplasmic E3 ubiquitin ligase that regulates various signaling pathways, such as the NF-kappa-B, mitogen-activated protein kinase (MAPK) and interferon regulatory factor (IRF) pathways, and thus controls a lot of biological processes in both immune and non-immune cell types. In TLR and RLR signaling pathways, acts as an E3 ubiquitin ligase promoting the synthesis of 'Lys-63'-linked polyubiquitin chains on several substrates such as ASC that lead to the activation of the type I interferon response or the inflammasome. Following the activation of certain TLRs such as TLR4, acts as a negative NF-kappa-B regulator, possibly to avoid unregulated inflammatory response, and its degradation via 'Lys-48'-linked polyubiquitination is required for MAPK activation and production of inflammatory cytokines. Alternatively, when TLR4 orchestrates bacterial expulsion, TRAF3 undergoes 'Lys-33'-linked polyubiquitination and subsequently binds to RALGDS, mobilizing the exocyst complex to rapidly expel intracellular bacteria back for clearance. Also acts as a constitutive negative regulator of the alternative NF-kappa-B pathway, which controls B-cell survival and lymphoid organ development. Required for normal antibody isotype switching from IgM to IgG. Plays a role T-cell dependent immune responses. Down-regulates proteolytic processing of NFKB2, and thereby inhibits non-canonical activation of NF-kappa-B. Promotes ubiquitination and proteasomal degradation of MAP3K14. The polypeptide is TNF receptor-associated factor 3 (Mus musculus (Mouse)).